Reading from the N-terminus, the 202-residue chain is Twist-related protein 1 (202 aa).

Positions 1 to 18 (MMQDVSSSPVSPADDSLS) are enriched in low complexity. A disordered region spans residues 1–105 (MMQDVSSSPV…GGGSPQSYEE (105 aa)). The span at 34-43 (RGGRKRRSSR) shows a compositional bias: basic residues. Composition is skewed to gly residues over residues 46–65 (AGGG…GGDE) and 80–99 (GCGG…GGGS). Residues 108-159 (TQRVMANVRERQRTQSLNEAFAALRKIIPTLPSDKLSKIQTLKLAARYIDFL) enclose the bHLH domain. The tract at residues 161 to 191 (QVLQSDELDSKMASCSYVAHERLSYAFSVWR) is sufficient for transactivation activity.

As to quaternary structure, efficient DNA binding requires dimerization with another bHLH protein. Homodimer or heterodimer with E proteins such as TCF3. ID1 binds preferentially to TCF3 but does not interact efficiently with TWIST1 so ID1 levels control the amount of TCF3 available to dimerize with TWIST1 and thus determine the type of dimer formed. Subset of mesodermal cells.

The protein resides in the nucleus. Functionally, acts as a transcriptional regulator. Inhibits myogenesis by sequestrating E proteins, inhibiting trans-activation by MEF2, and inhibiting DNA-binding by MYOD1 through physical interaction. This interaction probably involves the basic domains of both proteins. Also represses expression of pro-inflammatory cytokines such as TNFA and IL1B. Regulates cranial suture patterning and fusion. Activates transcription as a heterodimer with E proteins. Regulates gene expression differentially, depending on dimer composition. Homodimers induce expression of FGFR2 and POSTN while heterodimers repress FGFR2 and POSTN expression and induce THBS1 expression. Heterodimerization is also required for osteoblast differentiation. Represses the activity of the circadian transcriptional activator: NPAS2-BMAL1 heterodimer. The protein is Twist-related protein 1 (TWIST1) of Homo sapiens (Human).